The sequence spans 482 residues: MRLVDLLKGVKHEIKGNPNVDISGVCYDSRKAKPKYLFIAIKGFKTDGLLYVEEAIKNGAVAVVTDRDISEYPGVTVVLVEDARAAMAKIASNFYNNPTSKLTLIGITGTNGKTSVTYMLKAILEQQNNKVGLVGTIQNMIGDRVIPTTHTTPESLDLQELFSLMVNEGVKYVVMEVSSHSLALHRVDSCDFDIAVFTNLSQDHLDFHESMEEYAKTKSKLFKMAKKASVINIDDKYSSMMIESSKGKVLTYGIKDFAYVMAKEIKNSLSGVKFKVQIQDKKEEISLKIPGLFSVYNALAAITVADFLGIPLRSVREALSHVTVKGRFEPVETGRDFYVFIDYAHTPDGIRNIMEALKEYEAGRKILVFGAGGDRDKSKRPLMGEVAGKYADFCILTSDNPRSENPKEIIAQIEEGIKKTNCPYVVIEDRREAIRYALSNAQKDDVIILAGKGHETYQIIGDKVIPFDEREIVKEILAESEK.

S29 serves as a coordination point for UDP-N-acetyl-alpha-D-muramoyl-L-alanyl-D-glutamate. ATP is bound at residue 109–115 (GTNGKTS). Residues 151-152 (TT), S178, and R186 contribute to the UDP-N-acetyl-alpha-D-muramoyl-L-alanyl-D-glutamate site. The residue at position 218 (K218) is an N6-carboxylysine. Residues R375, 399 to 402 (DNPR), G451, and E455 contribute to the meso-2,6-diaminopimelate site. Residues 399–402 (DNPR) carry the Meso-diaminopimelate recognition motif motif.

This sequence belongs to the MurCDEF family. MurE subfamily. Mg(2+) serves as cofactor. Post-translationally, carboxylation is probably crucial for Mg(2+) binding and, consequently, for the gamma-phosphate positioning of ATP.

Its subcellular location is the cytoplasm. The catalysed reaction is UDP-N-acetyl-alpha-D-muramoyl-L-alanyl-D-glutamate + meso-2,6-diaminopimelate + ATP = UDP-N-acetyl-alpha-D-muramoyl-L-alanyl-gamma-D-glutamyl-meso-2,6-diaminopimelate + ADP + phosphate + H(+). It participates in cell wall biogenesis; peptidoglycan biosynthesis. In terms of biological role, catalyzes the addition of meso-diaminopimelic acid to the nucleotide precursor UDP-N-acetylmuramoyl-L-alanyl-D-glutamate (UMAG) in the biosynthesis of bacterial cell-wall peptidoglycan. The sequence is that of UDP-N-acetylmuramoyl-L-alanyl-D-glutamate--2,6-diaminopimelate ligase from Caldanaerobacter subterraneus subsp. tengcongensis (strain DSM 15242 / JCM 11007 / NBRC 100824 / MB4) (Thermoanaerobacter tengcongensis).